We begin with the raw amino-acid sequence, 635 residues long: DNA-directed RNA polymerase subunit gamma (635 aa).

Zn(2+) is bound by residues cysteine 74, cysteine 76, cysteine 89, and cysteine 92. Mg(2+)-binding residues include aspartate 471, aspartate 473, and aspartate 475.

This sequence belongs to the RNA polymerase beta' chain family. RpoC1 subfamily. In terms of assembly, in cyanobacteria the RNAP catalytic core is composed of 2 alpha, 1 beta, 1 beta', 1 gamma and 1 omega subunit. When a sigma factor is associated with the core the holoenzyme is formed, which can initiate transcription. Requires Mg(2+) as cofactor. Zn(2+) serves as cofactor.

It carries out the reaction RNA(n) + a ribonucleoside 5'-triphosphate = RNA(n+1) + diphosphate. DNA-dependent RNA polymerase catalyzes the transcription of DNA into RNA using the four ribonucleoside triphosphates as substrates. The polypeptide is DNA-directed RNA polymerase subunit gamma (Prochlorococcus marinus (strain NATL2A)).